We begin with the raw amino-acid sequence, 250 residues long: MSGHSKWATTKHKKAALDAKRGKLFAKLIKNVEVAARTGGGDPDGNPTLYDAIQKARKNSVPQDNIERARKRGAGEEAGGADWQTIMYEGYGPNGVAVLVECLTDNRNRAAGEVRTAMTRNGGSMADAGSVAYLFNRKGVVLLPKNGLSEDDVLSAVLEAGAEEINDLGESYEILTEPSDLVDVRKALQAEGIEYDSAETNFLASVNVPLDADGARKLFKLIDVLEDCDDVQNVFANFDVSDEVLEEVNA.

The protein belongs to the TACO1 family.

The protein localises to the cytoplasm. The sequence is that of Probable transcriptional regulatory protein SACE_2018 from Saccharopolyspora erythraea (strain ATCC 11635 / DSM 40517 / JCM 4748 / NBRC 13426 / NCIMB 8594 / NRRL 2338).